The sequence spans 144 residues: 3-dehydroquinate dehydratase (144 aa).

Y23 serves as the catalytic Proton acceptor. The substrate site is built by N74, H80, and D87. The active-site Proton donor is the H101. Substrate contacts are provided by residues 102-103 (LS) and R112.

Belongs to the type-II 3-dehydroquinase family. Homododecamer.

The catalysed reaction is 3-dehydroquinate = 3-dehydroshikimate + H2O. It functions in the pathway metabolic intermediate biosynthesis; chorismate biosynthesis; chorismate from D-erythrose 4-phosphate and phosphoenolpyruvate: step 3/7. Functionally, catalyzes a trans-dehydration via an enolate intermediate. This chain is 3-dehydroquinate dehydratase, found in Mesorhizobium japonicum (strain LMG 29417 / CECT 9101 / MAFF 303099) (Mesorhizobium loti (strain MAFF 303099)).